Here is an 82-residue protein sequence, read N- to C-terminus: ATP synthase subunit c (82 aa).

Helical transmembrane passes span 7 to 27 (LVAL…SIGI) and 53 to 73 (FILA…ALLF).

The protein belongs to the ATPase C chain family. F-type ATPases have 2 components, F(1) - the catalytic core - and F(0) - the membrane proton channel. F(1) has five subunits: alpha(3), beta(3), gamma(1), delta(1), epsilon(1). F(0) has three main subunits: a(1), b(2) and c(10-14). The alpha and beta chains form an alternating ring which encloses part of the gamma chain. F(1) is attached to F(0) by a central stalk formed by the gamma and epsilon chains, while a peripheral stalk is formed by the delta and b chains.

The protein resides in the cell inner membrane. Functionally, f(1)F(0) ATP synthase produces ATP from ADP in the presence of a proton or sodium gradient. F-type ATPases consist of two structural domains, F(1) containing the extramembraneous catalytic core and F(0) containing the membrane proton channel, linked together by a central stalk and a peripheral stalk. During catalysis, ATP synthesis in the catalytic domain of F(1) is coupled via a rotary mechanism of the central stalk subunits to proton translocation. Key component of the F(0) channel; it plays a direct role in translocation across the membrane. A homomeric c-ring of between 10-14 subunits forms the central stalk rotor element with the F(1) delta and epsilon subunits. The protein is ATP synthase subunit c of Acidovorax ebreus (strain TPSY) (Diaphorobacter sp. (strain TPSY)).